We begin with the raw amino-acid sequence, 1577 residues long: Vacuolar protein sorting/targeting protein PEP1 (1577 aa).

The signal sequence occupies residues 1-21 (MILLHFVYSLWALLLIPLINA). At 22-1391 (EEFTPKVTKT…EFKEKYSVSA (1370 aa)) the chain is on the lumenal side. BNR repeat units lie at residues 58–68 (ISFDDGETWEK) and 101–111 (YITNDQGKSWE). N-linked (GlcNAc...) asparagine glycans are attached at residues N121 and N168. 2 BNR repeats span residues 179 to 187 (SNDGGKSFS) and 414 to 423 (ISVDNGLTWT). N-linked (GlcNAc...) asparagine glycosylation occurs at N445. BNR repeat units follow at residues 485 to 495 (FISRDGGLTWK), 531 to 541 (YYSLDQGKTWT), and 762 to 771 (YISHDGGQTI). N791 carries an N-linked (GlcNAc...) asparagine glycan. The BNR 8 repeat unit spans residues 859–869 (YLTNDGGETFT). N-linked (GlcNAc...) asparagine glycosylation occurs at N1008. BNR repeat units lie at residues 1141–1150 (FFTTDGGETW) and 1183–1192 (YSTDFGKTWK). N1301 carries an N-linked (GlcNAc...) asparagine glycan. A helical transmembrane segment spans residues 1392–1412 (GPFAFIFISILLIIFFAAWFV). The Cytoplasmic segment spans residues 1413-1577 (YDRGIRRNGG…DSTAPSNENQ (165 aa)). Residues 1531 to 1577 (DDVPTLEEEHTSYTDQPTTTDVPDALPEGNEENIDRPDSTAPSNENQ) form a disordered region.

It belongs to the VPS10-related sortilin family.

Its subcellular location is the golgi apparatus. The protein localises to the trans-Golgi network membrane. It localises to the prevacuolar compartment membrane. Its function is as follows. Functions as a sorting receptor in the Golgi compartment required for the intracellular sorting and delivery of soluble vacuolar proteins, like carboxypeptidase Y (CPY) and proteinase A. Executes multiple rounds of sorting by cycling between the late Golgi and a prevacuolar endosome-like compartment. Binds the Golgi-modified P2 form of CPY, and this interaction is dependent on the presence of an intact CPY vacuolar protein sorting signal. The protein is Vacuolar protein sorting/targeting protein PEP1 (PEP1) of Saccharomyces cerevisiae (strain JAY291) (Baker's yeast).